The primary structure comprises 240 residues: LexA repressor (240 aa).

Residues 26 to 46 (FDEMKDALDLASKSGIHRLIT) constitute a DNA-binding region (H-T-H motif). The segment at 78–113 (QPRRGFSPSVIEGSLGKPQPVQPPAPAKPANDENNS) is disordered. Catalysis depends on for autocatalytic cleavage activity residues S160 and K198.

Belongs to the peptidase S24 family. As to quaternary structure, homodimer.

The catalysed reaction is Hydrolysis of Ala-|-Gly bond in repressor LexA.. In terms of biological role, represses a number of genes involved in the response to DNA damage (SOS response), including recA and lexA. In the presence of single-stranded DNA, RecA interacts with LexA causing an autocatalytic cleavage which disrupts the DNA-binding part of LexA, leading to derepression of the SOS regulon and eventually DNA repair. The polypeptide is LexA repressor (Rhizobium rhizogenes (strain K84 / ATCC BAA-868) (Agrobacterium radiobacter)).